The chain runs to 195 residues: Molybdenum cofactor guanylyltransferase (195 aa).

Residues 12–14 (LAG), Lys-25, Asn-53, Asp-70, and Asp-100 contribute to the GTP site. A Mg(2+)-binding site is contributed by Asp-100.

The protein belongs to the MobA family. As to quaternary structure, monomer. The cofactor is Mg(2+).

It is found in the cytoplasm. It catalyses the reaction Mo-molybdopterin + GTP + H(+) = Mo-molybdopterin guanine dinucleotide + diphosphate. In terms of biological role, transfers a GMP moiety from GTP to Mo-molybdopterin (Mo-MPT) cofactor (Moco or molybdenum cofactor) to form Mo-molybdopterin guanine dinucleotide (Mo-MGD) cofactor. The chain is Molybdenum cofactor guanylyltransferase from Vibrio campbellii (strain ATCC BAA-1116).